The sequence spans 425 residues: CinA-like protein (425 aa).

It belongs to the CinA family.

This is CinA-like protein from Mycobacterium marinum (strain ATCC BAA-535 / M).